Consider the following 654-residue polypeptide: Glycogen debranching enzyme (654 aa).

Aspartate 336 serves as the catalytic Nucleophile. The active-site Proton donor is the glutamate 371. Residues 459-484 form a disordered region; the sequence is EANGEENRDGTNSNYSDNHGKEGLGG.

The protein belongs to the glycosyl hydrolase 13 family.

It carries out the reaction Hydrolysis of (1-&gt;6)-alpha-D-glucosidic linkages to branches with degrees of polymerization of three or four glucose residues in limit dextrin.. It participates in glycan degradation; glycogen degradation. In terms of biological role, removes maltotriose and maltotetraose chains that are attached by 1,6-alpha-linkage to the limit dextrin main chain, generating a debranched limit dextrin. In Salmonella typhi, this protein is Glycogen debranching enzyme.